The chain runs to 338 residues: tRNA N6-adenosine threonylcarbamoyltransferase (338 aa).

Residues His111 and His115 each coordinate Fe cation. Residues 133–137 (LVSGG), Asp166, Gly179, Asp183, and Asn275 contribute to the substrate site. Asp300 contacts Fe cation.

This sequence belongs to the KAE1 / TsaD family. Requires Fe(2+) as cofactor.

Its subcellular location is the cytoplasm. The enzyme catalyses L-threonylcarbamoyladenylate + adenosine(37) in tRNA = N(6)-L-threonylcarbamoyladenosine(37) in tRNA + AMP + H(+). Required for the formation of a threonylcarbamoyl group on adenosine at position 37 (t(6)A37) in tRNAs that read codons beginning with adenine. Is involved in the transfer of the threonylcarbamoyl moiety of threonylcarbamoyl-AMP (TC-AMP) to the N6 group of A37, together with TsaE and TsaB. TsaD likely plays a direct catalytic role in this reaction. In Treponema denticola (strain ATCC 35405 / DSM 14222 / CIP 103919 / JCM 8153 / KCTC 15104), this protein is tRNA N6-adenosine threonylcarbamoyltransferase.